The chain runs to 201 residues: MGITSAMVKELRTKTGAGMMDCKEALTSSNGDFEKAIDYLRKKGMSAATKRSSKAAKEGTIASYIHMGGRIGVMVELNCETDFVAKTEDFKNTAKDIAMHVAASNPTYVNPDEIPEEALEREKEIYRSQALAEKKPEKIWDKIIEGKLNKYYEEVCLTKQKFIKNTDITIETLINNLIAKTGENVIIRRFARYQLGEELKK.

Residues 81 to 84 form an involved in Mg(2+) ion dislocation from EF-Tu region; it reads TDFV.

This sequence belongs to the EF-Ts family.

It localises to the cytoplasm. In terms of biological role, associates with the EF-Tu.GDP complex and induces the exchange of GDP to GTP. It remains bound to the aminoacyl-tRNA.EF-Tu.GTP complex up to the GTP hydrolysis stage on the ribosome. The sequence is that of Elongation factor Ts from Syntrophus aciditrophicus (strain SB).